The chain runs to 372 residues: tRNA-specific 2-thiouridylase MnmA (372 aa).

ATP is bound by residues 16–23 (GMSGGVDS) and Met42. The segment at 102–104 (NPD) is interaction with target base in tRNA. The active-site Nucleophile is Cys107. A disulfide bridge connects residues Cys107 and Cys205. Gly132 contributes to the ATP binding site. Residues 155 to 157 (KDQ) form an interaction with tRNA region. Cys205 acts as the Cysteine persulfide intermediate in catalysis. Residues 317–318 (RY) are interaction with tRNA.

The protein belongs to the MnmA/TRMU family.

It is found in the cytoplasm. It catalyses the reaction S-sulfanyl-L-cysteinyl-[protein] + uridine(34) in tRNA + AH2 + ATP = 2-thiouridine(34) in tRNA + L-cysteinyl-[protein] + A + AMP + diphosphate + H(+). Catalyzes the 2-thiolation of uridine at the wobble position (U34) of tRNA, leading to the formation of s(2)U34. This is tRNA-specific 2-thiouridylase MnmA from Shewanella baltica (strain OS185).